A 176-amino-acid chain; its full sequence is MKLIVGLGNPGQNYQFTLHNIGFMMIDYLLNTIITDKKIVKKHNSYIYKANVGSNLVLFVKPQTYMNSSGHAVKKILNEYKIILNDLLVLSDDIYLPEGNYKLKLKGGHGGHNGLRNIIDCLQTKKFKRLKIGVSQDHNISLEDYLLTPIDDKKKLMVQKSFPIISNIIKNFIQDC.

Tyr14 is a binding site for tRNA. His19 serves as the catalytic Proton acceptor. Residues Tyr65, Asn67, and Asn113 each contribute to the tRNA site.

This sequence belongs to the PTH family. As to quaternary structure, monomer.

The protein resides in the cytoplasm. It carries out the reaction an N-acyl-L-alpha-aminoacyl-tRNA + H2O = an N-acyl-L-amino acid + a tRNA + H(+). In terms of biological role, hydrolyzes ribosome-free peptidyl-tRNAs (with 1 or more amino acids incorporated), which drop off the ribosome during protein synthesis, or as a result of ribosome stalling. Its function is as follows. Catalyzes the release of premature peptidyl moieties from peptidyl-tRNA molecules trapped in stalled 50S ribosomal subunits, and thus maintains levels of free tRNAs and 50S ribosomes. The polypeptide is Peptidyl-tRNA hydrolase (Phytoplasma mali (strain AT)).